A 636-amino-acid polypeptide reads, in one-letter code: Threonine--tRNA ligase (636 aa).

The 63-residue stretch at 1–63 (MINITTSFPN…SKDGSVDPVT (63 aa)) folds into the TGS domain. Positions 244 to 535 (DHRKIAKDLG…LIEHYAGNIP (292 aa)) are catalytic. Cysteine 335, histidine 386, and histidine 512 together coordinate Zn(2+).

The protein belongs to the class-II aminoacyl-tRNA synthetase family. Homodimer. The cofactor is Zn(2+).

It is found in the cytoplasm. The enzyme catalyses tRNA(Thr) + L-threonine + ATP = L-threonyl-tRNA(Thr) + AMP + diphosphate + H(+). Its function is as follows. Catalyzes the attachment of threonine to tRNA(Thr) in a two-step reaction: L-threonine is first activated by ATP to form Thr-AMP and then transferred to the acceptor end of tRNA(Thr). Also edits incorrectly charged L-seryl-tRNA(Thr). This is Threonine--tRNA ligase from Anaplasma marginale (strain St. Maries).